The chain runs to 312 residues: Urease accessory protein UreD (312 aa).

The protein belongs to the UreD family. UreD, UreF and UreG form a complex that acts as a GTP-hydrolysis-dependent molecular chaperone, activating the urease apoprotein by helping to assemble the nickel containing metallocenter of UreC. The UreE protein probably delivers the nickel.

Its subcellular location is the cytoplasm. In terms of biological role, required for maturation of urease via the functional incorporation of the urease nickel metallocenter. The chain is Urease accessory protein UreD from Marinomonas sp. (strain MWYL1).